The sequence spans 79 residues: Probable [Fe-S]-dependent transcriptional repressor (79 aa).

Cysteine 56, cysteine 61, cysteine 64, and cysteine 70 together coordinate iron-sulfur cluster.

It belongs to the FeoC family.

Its function is as follows. May function as a transcriptional regulator that controls feoABC expression. This Serratia proteamaculans (strain 568) protein is Probable [Fe-S]-dependent transcriptional repressor.